We begin with the raw amino-acid sequence, 282 residues long: N-acetylaspartate synthetase (282 aa).

Residues 103-125 form a helical membrane-spanning segment; that stretch reads FLTVMCYVMTKSFTLTFCAPFIL. The N-acetyltransferase domain occupies 110–269; that stretch reads VMTKSFTLTF…RSPLERLFFQ (160 aa).

Belongs to the NAT8 family.

It is found in the cytoplasm. It localises to the microsome membrane. Its subcellular location is the mitochondrion membrane. The protein localises to the endoplasmic reticulum membrane. It carries out the reaction L-aspartate + acetyl-CoA = N-acetyl-L-aspartate + CoA + H(+). In terms of biological role, catalyzes the synthesis of N-acetylaspartate acid (NAA) from L-aspartate and acetyl-CoA. The protein is N-acetylaspartate synthetase (nat8l) of Danio rerio (Zebrafish).